Here is a 232-residue protein sequence, read N- to C-terminus: Lipopolysaccharide core heptose(II) kinase WaaY (232 aa).

Belongs to the protein kinase superfamily. RfaY/WaaY family.

It carries out the reaction alpha-D-Glc-(1-&gt;3)-[L-alpha-D-Hep-(1-&gt;7)]-L-alpha-D-Hep-(1-&gt;3)-4-O-PO3(2-)-L-alpha-D-Hep-(1-&gt;5)-[alpha-Kdo-(2-&gt;4)]-alpha-Kdo-(2-&gt;6)-lipid A + ATP = alpha-D-Glc-(1-&gt;3)-[L-alpha-D-Hep-(1-&gt;7)]-4-O-PO3(2-)-L-alpha-D-Hep-(1-&gt;3)-4-O-PO3(2-)-L-alpha-D-Hep-(1-&gt;5)-[alpha-Kdo-(2-&gt;4)]-alpha-Kdo-(2-&gt;6)-lipid A + ADP + H(+). The protein operates within bacterial outer membrane biogenesis; LPS core biosynthesis. Its function is as follows. Kinase involved in the biosynthesis of the core oligosaccharide region of lipopolysaccharide (LPS). Catalyzes the phosphorylation of the second heptose unit (HepII) of the inner core. This is Lipopolysaccharide core heptose(II) kinase WaaY from Escherichia coli (strain K12).